A 427-amino-acid polypeptide reads, in one-letter code: Peptidase B (427 aa).

Positions 195 and 200 each coordinate Mn(2+). K207 is an active-site residue. Mn(2+)-binding residues include D218, D277, and E279. Residue R281 is part of the active site.

Belongs to the peptidase M17 family. In terms of assembly, homohexamer. It depends on Mn(2+) as a cofactor.

The protein resides in the cytoplasm. The enzyme catalyses Release of an N-terminal amino acid, Xaa, from a peptide or arylamide. Xaa is preferably Glu or Asp but may be other amino acids, including Leu, Met, His, Cys and Gln.. In terms of biological role, probably plays an important role in intracellular peptide degradation. The protein is Peptidase B of Shigella flexneri.